A 515-amino-acid polypeptide reads, in one-letter code: Fatty acyl-CoA reductase 1 (515 aa).

Topologically, residues 1-465 (MVSIPEYYEG…ARKHLNKLRN (465 aa)) are cytoplasmic. Positions 451–507 (SGLPAARKHLNKLRNIRYGFNTILVILIWRIFIARSQMARNIWYFVVSLCYKFLSYF) are necessary and sufficient for PEX19-mediated localization into peroxisome membrane. The chain crosses the membrane as a helical span at residues 466 to 483 (IRYGFNTILVILIWRIFI). The Peroxisomal segment spans residues 484–515 (ARSQMARNIWYFVVSLCYKFLSYFRASSTMRY).

The protein belongs to the fatty acyl-CoA reductase family. In terms of assembly, interacts with PEX19; PEX19 mediates the targeting of FAR1 to peroxisomes.

The protein localises to the peroxisome membrane. It catalyses the reaction a long-chain fatty acyl-CoA + 2 NADPH + 2 H(+) = a long-chain primary fatty alcohol + 2 NADP(+) + CoA. The enzyme catalyses hexadecanoyl-CoA + 2 NADPH + 2 H(+) = hexadecan-1-ol + 2 NADP(+) + CoA. It carries out the reaction octadecanoyl-CoA + 2 NADPH + 2 H(+) = octadecan-1-ol + 2 NADP(+) + CoA. The catalysed reaction is eicosanoyl-CoA + 2 NADPH + 2 H(+) = eicosan-1-ol + 2 NADP(+) + CoA. It catalyses the reaction (9Z)-octadecenoyl-CoA + 2 NADPH + 2 H(+) = (9Z)-octadecen-1-ol + 2 NADP(+) + CoA. The enzyme catalyses (9Z,12Z)-octadecadienoyl-CoA + 2 NADPH + 2 H(+) = (9Z,12Z)-octadecadien-1-ol + 2 NADP(+) + CoA. It carries out the reaction 16-methylheptadecanoyl-CoA + 2 NADPH + 2 H(+) = 16-methylheptadecan-1-ol + 2 NADP(+) + CoA. The catalysed reaction is 18-methylnonadecanoyl-CoA + 2 NADPH + 2 H(+) = 18-methylnonadecan-1-ol + 2 NADP(+) + CoA. In terms of biological role, catalyzes the reduction of saturated and unsaturated C16 or C18 fatty acyl-CoA to fatty alcohols. It plays an essential role in the production of ether lipids/plasmalogens which synthesis requires fatty alcohols. In parallel, it is also required for wax monoesters production since fatty alcohols also constitute a substrate for their synthesis. The protein is Fatty acyl-CoA reductase 1 of Homo sapiens (Human).